Here is a 415-residue protein sequence, read N- to C-terminus: 8-amino-7-oxononanoate synthase (415 aa).

Substrate is bound at residue Arg-21. 117 to 118 contributes to the pyridoxal 5'-phosphate binding site; that stretch reads GY. A substrate-binding site is contributed by His-149. Pyridoxal 5'-phosphate-binding residues include Ser-195, His-223, and Thr-251. The residue at position 254 (Lys-254) is an N6-(pyridoxal phosphate)lysine. Thr-374 provides a ligand contact to substrate.

It belongs to the class-II pyridoxal-phosphate-dependent aminotransferase family. BioF subfamily. Homodimer. Pyridoxal 5'-phosphate is required as a cofactor.

It catalyses the reaction 6-carboxyhexanoyl-[ACP] + L-alanine + H(+) = (8S)-8-amino-7-oxononanoate + holo-[ACP] + CO2. Its pathway is cofactor biosynthesis; biotin biosynthesis. In terms of biological role, catalyzes the decarboxylative condensation of pimeloyl-[acyl-carrier protein] and L-alanine to produce 8-amino-7-oxononanoate (AON), [acyl-carrier protein], and carbon dioxide. The protein is 8-amino-7-oxononanoate synthase of Ralstonia pickettii (strain 12J).